The sequence spans 311 residues: Malate dehydrogenase (311 aa).

Residues 7–13 (GAAGGIG) and aspartate 34 each bind NAD(+). Positions 81 and 87 each coordinate substrate. NAD(+)-binding positions include asparagine 94 and 117-119 (ITN). The substrate site is built by asparagine 119 and arginine 153. The active-site Proton acceptor is histidine 177. An NAD(+)-binding site is contributed by methionine 227.

This sequence belongs to the LDH/MDH superfamily. MDH type 1 family. In terms of assembly, homodimer.

The enzyme catalyses (S)-malate + NAD(+) = oxaloacetate + NADH + H(+). Catalyzes the reversible oxidation of malate to oxaloacetate. The polypeptide is Malate dehydrogenase (Erwinia tasmaniensis (strain DSM 17950 / CFBP 7177 / CIP 109463 / NCPPB 4357 / Et1/99)).